A 594-amino-acid polypeptide reads, in one-letter code: Glutamate decarboxylase 1 (594 aa).

Low complexity predominate over residues 1–13 (MASSTPSSSATSS). The segment at 1–23 (MASSTPSSSATSSNAGADPNTTN) is disordered. Ser78 is modified (phosphoserine). 4-aminobutanoate is bound at residue 190–192 (QLS). The residue at position 405 (Lys405) is an N6-(pyridoxal phosphate)lysine. 4-aminobutanoate is bound at residue Arg567.

Belongs to the group II decarboxylase family. As to quaternary structure, homodimer. Pyridoxal 5'-phosphate serves as cofactor.

It carries out the reaction L-glutamate + H(+) = 4-aminobutanoate + CO2. Catalyzes the synthesis of the inhibitory neurotransmitter gamma-aminobutyric acid (GABA) with pyridoxal 5'-phosphate as cofactor. This chain is Glutamate decarboxylase 1 (GAD1), found in Pongo abelii (Sumatran orangutan).